Reading from the N-terminus, the 262-residue chain is MGRYDFRPLRVRQTAKALFDSKRNPNLPQWYEVVGNIPPGETLARPILRAPKVRHARKASKLFKPLPITYAEDKLRSDFFGDHPWELARPRLIVEDSGNDAKKYDWSKIVQPGKQLDGESVVQRQMWLMKHRNLSKASAYDAARQEFYAHRHRNEIRARIAKEEAQYVGAYFGKGPLEIGMELEDKSWEAWKRWANVQIEDEQAMRAQMFSGQSDEAPEGEGSDMSAGEYDMAVEELAGQGSIPNTPQSTVVPEGTSAPAHA.

Residues 211–262 (SGQSDEAPEGEGSDMSAGEYDMAVEELAGQGSIPNTPQSTVVPEGTSAPAHA) form a disordered region. Over residues 242 to 251 (SIPNTPQSTV) the composition is skewed to polar residues.

This sequence belongs to the mitochondrion-specific ribosomal protein mS23 family. Component of the mitochondrial small ribosomal subunit.

It localises to the mitochondrion. This chain is Small ribosomal subunit protein mS23 (RSM25), found in Phaeosphaeria nodorum (strain SN15 / ATCC MYA-4574 / FGSC 10173) (Glume blotch fungus).